Consider the following 498-residue polypeptide: Glycerol kinase (498 aa).

T11 contacts ADP. ATP-binding residues include T11, S12, and S13. Position 11 (T11) interacts with sn-glycerol 3-phosphate. R15 serves as a coordination point for ADP. Positions 81, 82, 133, and 242 each coordinate sn-glycerol 3-phosphate. Glycerol-binding residues include R81, E82, Y133, D242, and Q243. ADP-binding residues include T264 and G307. Residues T264, G307, Q311, and G412 each contribute to the ATP site. ADP contacts are provided by G412 and N416.

The protein belongs to the FGGY kinase family.

The enzyme catalyses glycerol + ATP = sn-glycerol 3-phosphate + ADP + H(+). It functions in the pathway polyol metabolism; glycerol degradation via glycerol kinase pathway; sn-glycerol 3-phosphate from glycerol: step 1/1. Its activity is regulated as follows. Inhibited by fructose 1,6-bisphosphate (FBP). Functionally, key enzyme in the regulation of glycerol uptake and metabolism. Catalyzes the phosphorylation of glycerol to yield sn-glycerol 3-phosphate. This chain is Glycerol kinase, found in Acidovorax ebreus (strain TPSY) (Diaphorobacter sp. (strain TPSY)).